A 122-amino-acid chain; its full sequence is MDQLIQVVEAAQERQDLPEIRPGDTIKMQLRVIEGEKERLQAYEGVIISDSGAGTNRTITVRKISNGVGVERIIPLNSPNIESIEVRKYGKTRRAKLSYLRKRTGKAALRVKERKVSAPAGK.

It belongs to the bacterial ribosomal protein bL19 family.

In terms of biological role, this protein is located at the 30S-50S ribosomal subunit interface and may play a role in the structure and function of the aminoacyl-tRNA binding site. This Prosthecochloris aestuarii (strain DSM 271 / SK 413) protein is Large ribosomal subunit protein bL19.